The following is a 530-amino-acid chain: Hyccin 2 (530 aa).

T30 and T306 each carry phosphothreonine. Residues S321 and S341 each carry the phosphoserine modification. A disordered region spans residues 328–404; the sequence is RREGAEGLNG…SNESPRDSVV (77 aa). Over residues 353–373 the composition is skewed to polar residues; the sequence is SGASLSSQPHGTKPPSSSQRG. Residues S430, S442, S444, and S491 each carry the phosphoserine modification. The tract at residues 502-530 is disordered; that stretch reads EGKELLSPGAPLTKQSRSPSFNMQLISQV. Residues 514-530 show a composition bias toward polar residues; it reads TKQSRSPSFNMQLISQV.

Belongs to the Hyccin family. Component of a phosphatidylinositol 4-kinase (PI4K) complex, composed of PI4KA, EFR3 (EFR3A or EFR3B), TTC7 (TTC7A or TTC7B) and HYCC (HYCC1 or HYCC2). Expressed in the central nervous system. Expressed at much lower level in oligodendrocytes than in neurons.

Its subcellular location is the cytoplasm. The protein resides in the cytosol. It localises to the cell membrane. Functionally, component of a complex required to localize phosphatidylinositol 4-kinase (PI4K) to the plasma membrane. The sequence is that of Hyccin 2 (Hycc2) from Mus musculus (Mouse).